Here is a 312-residue protein sequence, read N- to C-terminus: Cytochrome f (312 aa).

The N-terminal stretch at M1–A30 is a signal peptide. Heme is bound by residues Y31, C51, C54, and H55. Residues V278 to K298 form a helical membrane-spanning segment.

This sequence belongs to the cytochrome f family. The 4 large subunits of the cytochrome b6-f complex are cytochrome b6, subunit IV (17 kDa polypeptide, petD), cytochrome f and the Rieske protein, while the 4 small subunits are PetG, PetL, PetM and PetN. The complex functions as a dimer. The cofactor is heme.

It is found in the plastid. The protein resides in the chloroplast thylakoid membrane. In terms of biological role, component of the cytochrome b6-f complex, which mediates electron transfer between photosystem II (PSII) and photosystem I (PSI), cyclic electron flow around PSI, and state transitions. The sequence is that of Cytochrome f (petA) from Bigelowiella natans (Pedinomonas minutissima).